Reading from the N-terminus, the 252-residue chain is Small ribosomal subunit protein eS4 (252 aa).

The S4 RNA-binding domain occupies 43-106 (LPLLILVRDM…NKYYRVIPVP (64 aa)).

Belongs to the eukaryotic ribosomal protein eS4 family.

The protein is Small ribosomal subunit protein eS4 of Desulfurococcus amylolyticus (strain DSM 18924 / JCM 16383 / VKM B-2413 / 1221n) (Desulfurococcus kamchatkensis).